A 41-amino-acid chain; its full sequence is MRAECSAFRYFLKGDGDLVLSVYIRVLCVFLEPVQRGSCSL.

This is an uncharacterized protein from Treponema pallidum (strain Nichols).